A 185-amino-acid polypeptide reads, in one-letter code: Probable RNA 2'-phosphotransferase (185 aa).

This sequence belongs to the KptA/TPT1 family.

Functionally, removes the 2'-phosphate from RNA via an intermediate in which the phosphate is ADP-ribosylated by NAD followed by a presumed transesterification to release the RNA and generate ADP-ribose 1''-2''-cyclic phosphate (APPR&gt;P). May function as an ADP-ribosylase. This Bacillus thuringiensis subsp. konkukian (strain 97-27) protein is Probable RNA 2'-phosphotransferase.